The following is a 316-amino-acid chain: Thiamine-monophosphate kinase (316 aa).

Mg(2+)-binding residues include Asp26, Thr49, and Asp50. Asp57 is a substrate binding site. Asp79 serves as a coordination point for Mg(2+). ATP is bound by residues Tyr109, 126–127, and Arg151; that span reads GD. Asp127 contacts Mg(2+). Asp198 lines the Mg(2+) pocket. Ser200 is an ATP binding site. Residue Asp201 coordinates Mg(2+). Substrate contacts are provided by Glu251 and Phe305.

This sequence belongs to the thiamine-monophosphate kinase family.

The catalysed reaction is thiamine phosphate + ATP = thiamine diphosphate + ADP. Its pathway is cofactor biosynthesis; thiamine diphosphate biosynthesis; thiamine diphosphate from thiamine phosphate: step 1/1. Catalyzes the ATP-dependent phosphorylation of thiamine-monophosphate (TMP) to form thiamine-pyrophosphate (TPP), the active form of vitamin B1. The sequence is that of Thiamine-monophosphate kinase from Rhodopirellula baltica (strain DSM 10527 / NCIMB 13988 / SH1).